The chain runs to 315 residues: Nucleotide-binding protein PsycPRwf_2129 (315 aa).

An ATP-binding site is contributed by 29-36 (GRSGSGKT). Position 79–82 (79–82 (DIRT)) interacts with GTP.

The protein belongs to the RapZ-like family.

Functionally, displays ATPase and GTPase activities. The polypeptide is Nucleotide-binding protein PsycPRwf_2129 (Psychrobacter sp. (strain PRwf-1)).